An 88-amino-acid chain; its full sequence is Small ribosomal subunit protein eS25B (88 aa).

This sequence belongs to the eukaryotic ribosomal protein eS25 family. Component of the small ribosomal subunit (SSU). Mature yeast ribosomes consist of a small (40S) and a large (60S) subunit. The 40S small subunit contains 1 molecule of ribosomal RNA (18S rRNA) and at least 33 different proteins. The large 60S subunit contains 3 rRNA molecules (25S, 5.8S and 5S rRNA) and at least 46 different proteins.

It localises to the cytoplasm. Its function is as follows. Component of the ribosome, a large ribonucleoprotein complex responsible for the synthesis of proteins in the cell. The small ribosomal subunit (SSU) binds messenger RNAs (mRNAs) and translates the encoded message by selecting cognate aminoacyl-transfer RNA (tRNA) molecules. The large subunit (LSU) contains the ribosomal catalytic site termed the peptidyl transferase center (PTC), which catalyzes the formation of peptide bonds, thereby polymerizing the amino acids delivered by tRNAs into a polypeptide chain. The nascent polypeptides leave the ribosome through a tunnel in the LSU and interact with protein factors that function in enzymatic processing, targeting, and the membrane insertion of nascent chains at the exit of the ribosomal tunnel. This is Small ribosomal subunit protein eS25B (rps2501) from Schizosaccharomyces pombe (strain 972 / ATCC 24843) (Fission yeast).